Here is a 216-residue protein sequence, read N- to C-terminus: Redox-sensing transcriptional repressor Rex (216 aa).

A DNA-binding region (H-T-H motif) is located at residues 20-59 (QYYRLFKSLVEENVTRTNSQLISEKIGVDAATIRRDFSLF). An NAD(+)-binding site is contributed by 94–99 (GVGNLG).

It belongs to the transcriptional regulatory Rex family. In terms of assembly, homodimer.

The protein resides in the cytoplasm. Functionally, modulates transcription in response to changes in cellular NADH/NAD(+) redox state. The chain is Redox-sensing transcriptional repressor Rex from Lactococcus lactis subsp. cremoris (strain SK11).